Consider the following 206-residue polypeptide: High frequency lysogenization protein HflD homolog (206 aa).

The protein belongs to the HflD family.

It localises to the cytoplasm. It is found in the cell inner membrane. The sequence is that of High frequency lysogenization protein HflD homolog from Pseudomonas savastanoi pv. phaseolicola (strain 1448A / Race 6) (Pseudomonas syringae pv. phaseolicola (strain 1448A / Race 6)).